A 243-amino-acid polypeptide reads, in one-letter code: Glutathione S-transferase U14 (243 aa).

The 83-residue stretch at 5-87 folds into the GST N-terminal domain; that stretch reads DTVKLIGCSD…YLDEAWPSDP (83 aa). Glutathione is bound by residues 15–16, 44–45, 58–59, and 71–72; these read DP, EK, KT, and ES. In terms of domain architecture, GST C-terminal spans 93–220; it reads NAYDRASARF…MPTVEEVTEL (128 aa). Position 159 is a phosphothreonine (threonine 159).

It belongs to the GST superfamily. Tau family.

It localises to the cytoplasm. Its subcellular location is the cytosol. The enzyme catalyses RX + glutathione = an S-substituted glutathione + a halide anion + H(+). In terms of biological role, may be involved in the conjugation of reduced glutathione to a wide number of exogenous and endogenous hydrophobic electrophiles and have a detoxification role against certain herbicides. The polypeptide is Glutathione S-transferase U14 (GSTU14) (Arabidopsis thaliana (Mouse-ear cress)).